A 215-amino-acid chain; its full sequence is Thymidylate kinase (215 aa).

10–17 provides a ligand contact to ATP; sequence GGEGVGKT.

This sequence belongs to the thymidylate kinase family.

It carries out the reaction dTMP + ATP = dTDP + ADP. In terms of biological role, phosphorylation of dTMP to form dTDP in both de novo and salvage pathways of dTTP synthesis. This chain is Thymidylate kinase, found in Bartonella henselae (strain ATCC 49882 / DSM 28221 / CCUG 30454 / Houston 1) (Rochalimaea henselae).